We begin with the raw amino-acid sequence, 433 residues long: ATP-dependent RNA helicase SUB2 (433 aa).

Positions 1-17 are enriched in acidic residues; sequence MSAENQEELLDYSDSEE. Positions 1–39 are disordered; that stretch reads MSAENQEELLDYSDSEEIAVPTTTQAGEGESANDKEADK. Residues 49–77 carry the Q motif motif; sequence TGFRDFLLKPELLRAIGDCGFEHPSEVQQ. Positions 80 to 255 constitute a Helicase ATP-binding domain; the sequence is IPQSILGTDV…KKFMQNPLEI (176 aa). An ATP-binding site is contributed by 93–100; that stretch reads AKSGLGKT. Positions 202 to 205 match the DEAD box motif; that stretch reads DECD. The region spanning 267-428 is the Helicase C-terminal domain; it reads GLQQYYIKLE…EFPEEGVDPS (162 aa).

It belongs to the DEAD box helicase family. DECD subfamily.

It is found in the nucleus. It catalyses the reaction ATP + H2O = ADP + phosphate + H(+). Its function is as follows. ATP-binding RNA helicase involved in transcription elongation and required for the export of mRNA out of the nucleus. SUB2 also plays a role in pre-mRNA splicing and spliceosome assembly. May be involved in rDNA and telomeric silencing, and maintenance of genome integrity. The polypeptide is ATP-dependent RNA helicase SUB2 (SUB2) (Lodderomyces elongisporus (strain ATCC 11503 / CBS 2605 / JCM 1781 / NBRC 1676 / NRRL YB-4239) (Yeast)).